The chain runs to 478 residues: Lysosome membrane protein 2 (478 aa).

At 1-4 the chain is on the cytoplasmic side; the sequence is MGRC. The helical transmembrane segment at 5-27 threads the bilayer; it reads CFYTAGTLSLLLLVTSVTLLVAR. The Lumenal portion of the chain corresponds to 28 to 433; that stretch reads VFQKAVDQTI…QLKSVINTTL (406 aa). N-linked (GlcNAc...) asparagine glycosylation is found at N45, N68, N105, and N122. Positions 155–191 are important for interaction with GBA1; it reads LIEAMLKAYQQKLFVIHTVHELLWGYKDEILSLVHIF. N-linked (GlcNAc...) asparagine glycosylation is found at N206, N224, N249, and N304. Disulfide bonds link C274/C329 and C312/C318. 3 N-linked (GlcNAc...) asparagine glycosylation sites follow: N325, N412, and N430. The helical transmembrane segment at 434–459 threads the bilayer; it reads VVTNIPYIIMALGVFFGLVFTWLACR. Residues 460–478 are Cytoplasmic-facing; that stretch reads GQGSMDEGTADERAPLIRT.

Belongs to the CD36 family. As to quaternary structure, interacts with GBA1. Acylated by palmitic acid group(s). In terms of processing, heavily glycosylated. As to expression, detected in the extracts of brain, heart, lung, liver and kidney.

It localises to the lysosome membrane. Acts as a lysosomal receptor for glucosylceramidase (GBA1) targeting. This Mus musculus (Mouse) protein is Lysosome membrane protein 2 (Scarb2).